A 361-amino-acid polypeptide reads, in one-letter code: Mitogen-activated protein kinase 14A (361 aa).

Positions 25-309 (YQNLSPVGSG…AAEALAHPYF (285 aa)) constitute a Protein kinase domain. ATP contacts are provided by residues 31 to 39 (VGSGAYGSV) and lysine 54. The active-site Proton acceptor is aspartate 169. At threonine 181 the chain carries Phosphothreonine; by MAP2K3. The TXY signature appears at 181–183 (TGY). At tyrosine 183 the chain carries Phosphotyrosine; by MAP2K3.

This sequence belongs to the protein kinase superfamily. CMGC Ser/Thr protein kinase family. MAP kinase subfamily. The cofactor is Mg(2+). In terms of processing, dually phosphorylated on Thr-181 and Tyr-183, which activates the enzyme.

It is found in the cytoplasm. The protein localises to the nucleus. It catalyses the reaction L-seryl-[protein] + ATP = O-phospho-L-seryl-[protein] + ADP + H(+). It carries out the reaction L-threonyl-[protein] + ATP = O-phospho-L-threonyl-[protein] + ADP + H(+). Activated by threonine and tyrosine phosphorylation by the dual specificity kinase, MKK3. Serine/threonine kinase which acts as an essential component of the MAP kinase signal transduction pathway. Mapk14a is one of the four p38 MAPKs which play an important role in the cascades of cellular responses evoked by extracellular stimuli such as pro-inflammatory cytokines or physical stress leading to direct activation of transcription factors. Accordingly, p38 MAPKs phosphorylate a broad range of proteins and it has been estimated that they may have approximately 200 to 300 substrates each. Some of the targets are downstream kinases which are activated through phosphorylation and further phosphorylate additional targets. Required for cytokinesis on the future dorsal side of the blastodisc, suggesting a role in symmetrical and synchronous blastomere cleavage. This Danio rerio (Zebrafish) protein is Mitogen-activated protein kinase 14A (mapk14a).